An 87-amino-acid polypeptide reads, in one-letter code: uncharacterized protein (87 aa).

2 helical membrane-spanning segments follow: residues 10 to 30 (VAFTVLAYFTFFAGVFLFSIG) and 43 to 63 (GYYIAVMILVAVGAILTQKVT).

The protein localises to the cell membrane. This is an uncharacterized protein from Bacillus subtilis (strain 168).